Reading from the N-terminus, the 332-residue chain is HTH-type transcriptional regulator RegA (332 aa).

Positions methionine 1–threonine 57 constitute an HTH lacI-type domain. The segment at residues isoleucine 5–asparagine 24 is a DNA-binding region (H-T-H motif).

Functionally, involved in the regulation of amylase production. The protein is HTH-type transcriptional regulator RegA (regA) of Clostridium saccharobutylicum.